Consider the following 291-residue polypeptide: Protease HtpX homolog (291 aa).

The next 2 helical transmembrane spans lie at Val-4–Leu-24 and Met-38–Leu-58. Zn(2+) is bound at residue His-144. Glu-145 is an active-site residue. His-148 is a Zn(2+) binding site. The next 2 helical transmembrane spans lie at Leu-159–Leu-179 and Ile-199–Phe-219. Position 224 (Glu-224) interacts with Zn(2+).

This sequence belongs to the peptidase M48B family. Zn(2+) is required as a cofactor.

It is found in the cell inner membrane. The polypeptide is Protease HtpX homolog (Chlorobium phaeovibrioides (strain DSM 265 / 1930) (Prosthecochloris vibrioformis (strain DSM 265))).